Reading from the N-terminus, the 68-residue chain is Phycobilisome 7.8 kDa linker polypeptide, allophycocyanin-associated, core (68 aa).

The 56-residue stretch at 2–57 (SRLFKITALVPSLSRTRTQRELQNTYFTKLVPYENWFREQQRIQKAGGKIIKVELA) folds into the CpcD-like domain.

It belongs to the phycobilisome linker protein family.

The protein resides in the cellular thylakoid membrane. Functionally, rod linker protein, associated with allophycocyanin. Linker polypeptides determine the state of aggregation and the location of the disk-shaped phycobiliprotein units within the phycobilisome and modulate their spectroscopic properties in order to mediate a directed and optimal energy transfer. The chain is Phycobilisome 7.8 kDa linker polypeptide, allophycocyanin-associated, core (apcC) from Nostoc sp. (strain PCC 7120 / SAG 25.82 / UTEX 2576).